Here is a 445-residue protein sequence, read N- to C-terminus: Methionine aminopeptidase 2 (445 aa).

The interval 1 to 76 is disordered; the sequence is MAAQVASGVG…KKKCTSKVQT (76 aa). Residues 57-71 show a composition bias toward basic residues; that stretch reads AKKKKKKTKKKKKCT. Histidine 195 is a binding site for substrate. Positions 215, 226, and 295 each coordinate a divalent metal cation. Histidine 303 provides a ligand contact to substrate. Positions 331 and 426 each coordinate a divalent metal cation.

Belongs to the peptidase M24A family. Methionine aminopeptidase eukaryotic type 2 subfamily. Requires Co(2+) as cofactor. Zn(2+) serves as cofactor. Mn(2+) is required as a cofactor. The cofactor is Fe(2+).

The protein localises to the cytoplasm. It catalyses the reaction Release of N-terminal amino acids, preferentially methionine, from peptides and arylamides.. In terms of biological role, cotranslationally removes the N-terminal methionine from nascent proteins. The N-terminal methionine is often cleaved when the second residue in the primary sequence is small and uncharged (Met-Ala-, Cys, Gly, Pro, Ser, Thr, or Val). The chain is Methionine aminopeptidase 2 from Paracoccidioides lutzii (strain ATCC MYA-826 / Pb01) (Paracoccidioides brasiliensis).